Consider the following 262-residue polypeptide: Ribosomal RNA small subunit methyltransferase A (262 aa).

Residues N14, L16, G41, E63, D85, and N105 each contribute to the S-adenosyl-L-methionine site.

It belongs to the class I-like SAM-binding methyltransferase superfamily. rRNA adenine N(6)-methyltransferase family. RsmA subfamily.

It localises to the cytoplasm. The catalysed reaction is adenosine(1518)/adenosine(1519) in 16S rRNA + 4 S-adenosyl-L-methionine = N(6)-dimethyladenosine(1518)/N(6)-dimethyladenosine(1519) in 16S rRNA + 4 S-adenosyl-L-homocysteine + 4 H(+). Its function is as follows. Specifically dimethylates two adjacent adenosines (A1518 and A1519) in the loop of a conserved hairpin near the 3'-end of 16S rRNA in the 30S particle. May play a critical role in biogenesis of 30S subunits. The sequence is that of Ribosomal RNA small subunit methyltransferase A from Maridesulfovibrio salexigens (strain ATCC 14822 / DSM 2638 / NCIMB 8403 / VKM B-1763) (Desulfovibrio salexigens).